We begin with the raw amino-acid sequence, 86 residues long: Cell division topological specificity factor (86 aa).

Belongs to the MinE family.

Its function is as follows. Prevents the cell division inhibition by proteins MinC and MinD at internal division sites while permitting inhibition at polar sites. This ensures cell division at the proper site by restricting the formation of a division septum at the midpoint of the long axis of the cell. This Azoarcus sp. (strain BH72) protein is Cell division topological specificity factor.